Reading from the N-terminus, the 282-residue chain is Aldo-keto reductase BQ2027_MB2996 (282 aa).

Y57 acts as the Proton donor in catalysis. NADPH contacts are provided by L197, V235, R237, S238, A239, R243, S246, N247, and R273.

The protein belongs to the aldo/keto reductase family.

The protein is Aldo-keto reductase BQ2027_MB2996 of Mycobacterium bovis (strain ATCC BAA-935 / AF2122/97).